The following is a 137-amino-acid chain: Nucleoside diphosphate kinase (137 aa).

Residues lysine 11, phenylalanine 59, arginine 87, threonine 93, arginine 104, and asparagine 114 each contribute to the ATP site. The Pros-phosphohistidine intermediate role is filled by histidine 117.

Belongs to the NDK family. Homotetramer. It depends on Mg(2+) as a cofactor.

The protein resides in the cytoplasm. The enzyme catalyses a 2'-deoxyribonucleoside 5'-diphosphate + ATP = a 2'-deoxyribonucleoside 5'-triphosphate + ADP. The catalysed reaction is a ribonucleoside 5'-diphosphate + ATP = a ribonucleoside 5'-triphosphate + ADP. Its function is as follows. Major role in the synthesis of nucleoside triphosphates other than ATP. The ATP gamma phosphate is transferred to the NDP beta phosphate via a ping-pong mechanism, using a phosphorylated active-site intermediate. This chain is Nucleoside diphosphate kinase, found in Frankia alni (strain DSM 45986 / CECT 9034 / ACN14a).